A 105-amino-acid chain; its full sequence is Small ribosomal subunit protein uS10 (105 aa).

The protein belongs to the universal ribosomal protein uS10 family. Part of the 30S ribosomal subunit.

Its function is as follows. Involved in the binding of tRNA to the ribosomes. This is Small ribosomal subunit protein uS10 from Rickettsia felis (strain ATCC VR-1525 / URRWXCal2) (Rickettsia azadi).